The primary structure comprises 1228 residues: DNA-directed RNA polymerase subunit beta (1228 aa).

This sequence belongs to the RNA polymerase beta chain family. In terms of assembly, the RNAP catalytic core consists of 2 alpha, 1 beta, 1 beta' and 1 omega subunit. When a sigma factor is associated with the core the holoenzyme is formed, which can initiate transcription.

The enzyme catalyses RNA(n) + a ribonucleoside 5'-triphosphate = RNA(n+1) + diphosphate. Its function is as follows. DNA-dependent RNA polymerase catalyzes the transcription of DNA into RNA using the four ribonucleoside triphosphates as substrates. In Leptospira biflexa serovar Patoc (strain Patoc 1 / Ames), this protein is DNA-directed RNA polymerase subunit beta.